The following is a 1221-amino-acid chain: DNA-directed RNA polymerase subunit beta' (1221 aa).

Cys60, Cys62, Cys75, and Cys78 together coordinate Zn(2+). Residues Asp449, Asp451, and Asp453 each coordinate Mg(2+). Residues Cys820, Cys894, Cys901, and Cys904 each contribute to the Zn(2+) site.

This sequence belongs to the RNA polymerase beta' chain family. In terms of assembly, the RNAP catalytic core consists of 2 alpha, 1 beta, 1 beta' and 1 omega subunit. When a sigma factor is associated with the core the holoenzyme is formed, which can initiate transcription. The cofactor is Mg(2+). Zn(2+) serves as cofactor.

The catalysed reaction is RNA(n) + a ribonucleoside 5'-triphosphate = RNA(n+1) + diphosphate. DNA-dependent RNA polymerase catalyzes the transcription of DNA into RNA using the four ribonucleoside triphosphates as substrates. The polypeptide is DNA-directed RNA polymerase subunit beta' (Ligilactobacillus salivarius (strain UCC118) (Lactobacillus salivarius)).